The following is a 176-amino-acid chain: Probable DNA-directed RNA polymerase subunit delta (176 aa).

Positions 14–81 (CSMIEVVHSV…GENRWGLRSW (68 aa)) constitute an HTH HARE-type domain. The disordered stretch occupies residues 90–176 (EILPQPKPKK…ETEEEEEEEL (87 aa)). Residues 106 to 176 (DGFDDYIEED…ETEEEEEEEL (71 aa)) show a composition bias toward acidic residues.

The protein belongs to the RpoE family. RNAP is composed of a core of 2 alpha, a beta and a beta' subunits. The core is associated with a delta subunit and one of several sigma factors.

Participates in both the initiation and recycling phases of transcription. In the presence of the delta subunit, RNAP displays an increased specificity of transcription, a decreased affinity for nucleic acids, and an increased efficiency of RNA synthesis because of enhanced recycling. In Bacillus thuringiensis subsp. konkukian (strain 97-27), this protein is Probable DNA-directed RNA polymerase subunit delta.